The primary structure comprises 362 residues: Phosphoserine aminotransferase (362 aa).

S9 and R42 together coordinate L-glutamate. Pyridoxal 5'-phosphate contacts are provided by residues G76–R77, W102, T153, D174, and Q197. K198 is subject to N6-(pyridoxal phosphate)lysine. Residue N239–T240 participates in pyridoxal 5'-phosphate binding.

It belongs to the class-V pyridoxal-phosphate-dependent aminotransferase family. SerC subfamily. Homodimer. The cofactor is pyridoxal 5'-phosphate.

The protein resides in the cytoplasm. The catalysed reaction is O-phospho-L-serine + 2-oxoglutarate = 3-phosphooxypyruvate + L-glutamate. The enzyme catalyses 4-(phosphooxy)-L-threonine + 2-oxoglutarate = (R)-3-hydroxy-2-oxo-4-phosphooxybutanoate + L-glutamate. It participates in amino-acid biosynthesis; L-serine biosynthesis; L-serine from 3-phospho-D-glycerate: step 2/3. Its pathway is cofactor biosynthesis; pyridoxine 5'-phosphate biosynthesis; pyridoxine 5'-phosphate from D-erythrose 4-phosphate: step 3/5. Its function is as follows. Catalyzes the reversible conversion of 3-phosphohydroxypyruvate to phosphoserine and of 3-hydroxy-2-oxo-4-phosphonooxybutanoate to phosphohydroxythreonine. The polypeptide is Phosphoserine aminotransferase (Escherichia coli O139:H28 (strain E24377A / ETEC)).